The chain runs to 361 residues: NudC domain-containing protein 3 (361 aa).

Over residues 87 to 97 (KIRRKEEEEAK) the composition is skewed to basic and acidic residues. 2 disordered regions span residues 87 to 106 (KIRR…AAEK) and 124 to 158 (LDGH…VAGA). A Phosphoserine modification is found at Ser146. A compositionally biased stretch (low complexity) spans 148–158 (EAEAPGAVAGA). The CS domain maps to 185 to 277 (AVRENYTWSQ…VGEYWWNAIL (93 aa)). 2 positions are modified to phosphoserine: Ser340 and Ser355.

The protein is NudC domain-containing protein 3 (NUDCD3) of Homo sapiens (Human).